Consider the following 311-residue polypeptide: Malate dehydrogenase (311 aa).

Residues 7–13 (GAAGGIG) and D34 each bind NAD(+). Substrate-binding residues include R81 and R87. NAD(+)-binding positions include N94 and 117–119 (ITN). Positions 119 and 153 each coordinate substrate. The Proton acceptor role is filled by H177. M227 contributes to the NAD(+) binding site.

This sequence belongs to the LDH/MDH superfamily. MDH type 1 family. As to quaternary structure, homodimer.

It carries out the reaction (S)-malate + NAD(+) = oxaloacetate + NADH + H(+). Functionally, catalyzes the reversible oxidation of malate to oxaloacetate. The sequence is that of Malate dehydrogenase from Histophilus somni (strain 129Pt) (Haemophilus somnus).